A 533-amino-acid chain; its full sequence is Glucose-6-phosphate exchanger SLC37A1 (533 aa).

The helical transmembrane segment at 18 to 38 (QWYRAFIFILTFLLYASFHLS) threads the bilayer. A glycan (N-linked (GlcNAc...) asparagine) is linked at Asn-81. 4 helical membrane passes run 100-120 (GALD…SGII), 129-149 (YLTF…LGYF), 157-177 (FYVV…PSVV), and 222-242 (SFVV…LFLI). Asn-263 is a glycosylation site (N-linked (GlcNAc...) asparagine). Helical transmembrane passes span 304–324 (VVIL…TGAL), 334–354 (LCLL…PLYI), 366–386 (GELS…AGVI), 394–414 (ASTC…FSTV), 423–443 (IAML…ITTA), 466–486 (AIID…AGLL), and 490–510 (GWSN…LFLI).

This sequence belongs to the major facilitator superfamily. Organophosphate:Pi antiporter (OPA) (TC 2.A.1.4) family. In terms of tissue distribution, expressed in numerous tissues, with highest expression in pancreas, kidney, bone marrow, spleen, liver, small intestine, as well as in fetal brain, liver and spleen.

It is found in the endoplasmic reticulum membrane. The enzyme catalyses D-glucose 6-phosphate(in) + phosphate(out) = D-glucose 6-phosphate(out) + phosphate(in). Its activity is regulated as follows. Inhibited by vanadate but not by chlorogenic acid. In terms of biological role, inorganic phosphate and glucose-6-phosphate antiporter. May transport cytoplasmic glucose-6-phosphate into the lumen of the endoplasmic reticulum and translocate inorganic phosphate into the opposite direction. Independent of a lumenal glucose-6-phosphatase. May not play a role in homeostatic regulation of blood glucose levels. The polypeptide is Glucose-6-phosphate exchanger SLC37A1 (Homo sapiens (Human)).